The primary structure comprises 1201 residues: Vitamin B12-dependent ribonucleotide reductase (1201 aa).

Residues serine 153, 198–199 (AC), glycine 230, 482–486 (NPCSE), and 683–687 (PTGTI) contribute to the substrate site. A disulfide bridge connects residues cysteine 199 and cysteine 495. Asparagine 482 serves as the catalytic Proton acceptor. The active-site Cysteine radical intermediate is cysteine 484. Residue glutamate 486 is the Proton acceptor of the active site. The span at 1100–1118 (DEIGSKRATAESNGQEKET) shows a compositional bias: basic and acidic residues. The disordered stretch occupies residues 1100-1120 (DEIGSKRATAESNGQEKETLS).

The protein belongs to the ribonucleoside diphosphate reductase class-2 family. Adenosylcob(III)alamin is required as a cofactor.

It carries out the reaction a 2'-deoxyribonucleoside 5'-diphosphate + [thioredoxin]-disulfide + H2O = a ribonucleoside 5'-diphosphate + [thioredoxin]-dithiol. Its function is as follows. Catalyzes the reduction of ribonucleotides to deoxyribonucleotides. May function to provide a pool of deoxyribonucleotide precursors for DNA repair during oxygen limitation and/or for immediate growth after restoration of oxygen. The chain is Vitamin B12-dependent ribonucleotide reductase (nrdJ) from Leptospira interrogans serogroup Icterohaemorrhagiae serovar copenhageni (strain Fiocruz L1-130).